Consider the following 450-residue polypeptide: Histidinol dehydrogenase (450 aa).

Tyrosine 135, glutamine 197, and asparagine 225 together coordinate NAD(+). 3 residues coordinate substrate: threonine 248, glutamine 270, and histidine 273. 2 residues coordinate Zn(2+): glutamine 270 and histidine 273. Catalysis depends on proton acceptor residues glutamate 339 and histidine 340. 4 residues coordinate substrate: histidine 340, aspartate 373, glutamate 427, and histidine 432. Aspartate 373 contacts Zn(2+). Histidine 432 is a binding site for Zn(2+).

This sequence belongs to the histidinol dehydrogenase family. It depends on Zn(2+) as a cofactor.

The enzyme catalyses L-histidinol + 2 NAD(+) + H2O = L-histidine + 2 NADH + 3 H(+). The protein operates within amino-acid biosynthesis; L-histidine biosynthesis; L-histidine from 5-phospho-alpha-D-ribose 1-diphosphate: step 9/9. Functionally, catalyzes the sequential NAD-dependent oxidations of L-histidinol to L-histidinaldehyde and then to L-histidine. The sequence is that of Histidinol dehydrogenase from Corynebacterium jeikeium (strain K411).